A 366-amino-acid chain; its full sequence is Tudor domain-containing protein 10 (366 aa).

Residues 34-107 (TEVYVGNLPL…RKLFVNTSKR (74 aa)) form the RRM domain. The Tudor domain occupies 210–317 (FWAMHVTEAL…PLTQPFMLEK (108 aa)). The stretch at 216 to 237 (TEALHQNMQALFSTLAQAEEQQ) forms a coiled coil.

The chain is Tudor domain-containing protein 10 (TDRD10) from Homo sapiens (Human).